The following is a 173-amino-acid chain: MHCPFCQHADTRVIDSRVSEDGATIRRRRECEACGERFSTMETVELKLPAIVKSDGTREAFDQRKVRAGFDRALQKRAVAEDKIEAAVRAVVHQLRISGEREVPSIKVGEFVMNELRKLDHVGYVRFASVYRSFEDVADFREEIEKLERDLPSSTEQLQLLGDVIALTKKKKG.

Residues 3–34 (CPFCQHADTRVIDSRVSEDGATIRRRRECEAC) fold into a zinc finger. An ATP-cone domain is found at 49–139 (PAIVKSDGTR…VYRSFEDVAD (91 aa)).

It belongs to the NrdR family. The cofactor is Zn(2+).

In terms of biological role, negatively regulates transcription of bacterial ribonucleotide reductase nrd genes and operons by binding to NrdR-boxes. The polypeptide is Transcriptional repressor NrdR (Stenotrophomonas maltophilia (strain R551-3)).